The primary structure comprises 428 residues: 3-phosphoshikimate 1-carboxyvinyltransferase (428 aa).

Residues lysine 21, serine 22, and arginine 26 each coordinate 3-phosphoshikimate. Lysine 21 lines the phosphoenolpyruvate pocket. Positions 92 and 120 each coordinate phosphoenolpyruvate. 3-phosphoshikimate contacts are provided by serine 165, glutamine 167, aspartate 313, and lysine 340. Phosphoenolpyruvate is bound at residue glutamine 167. Aspartate 313 acts as the Proton acceptor in catalysis. Phosphoenolpyruvate-binding residues include arginine 344 and arginine 386.

Belongs to the EPSP synthase family. As to quaternary structure, monomer.

Its subcellular location is the cytoplasm. The catalysed reaction is 3-phosphoshikimate + phosphoenolpyruvate = 5-O-(1-carboxyvinyl)-3-phosphoshikimate + phosphate. It functions in the pathway metabolic intermediate biosynthesis; chorismate biosynthesis; chorismate from D-erythrose 4-phosphate and phosphoenolpyruvate: step 6/7. Catalyzes the transfer of the enolpyruvyl moiety of phosphoenolpyruvate (PEP) to the 5-hydroxyl of shikimate-3-phosphate (S3P) to produce enolpyruvyl shikimate-3-phosphate and inorganic phosphate. This chain is 3-phosphoshikimate 1-carboxyvinyltransferase, found in Carboxydothermus hydrogenoformans (strain ATCC BAA-161 / DSM 6008 / Z-2901).